A 295-amino-acid polypeptide reads, in one-letter code: Putative aquaporin-12A (295 aa).

Residues 1-21 (MAGLNVSLSFFFATFALCEAA) form a helical membrane-spanning segment. Residues 22–54 (RRASKALLPVGAYEVFAREAMRTLVELGPWAGD) lie on the Extracellular side of the membrane. The helical transmembrane segment at 55 to 75 (FGPDLLLTLLFLLFLAHGVTL) threads the bilayer. Topologically, residues 76–99 (DGASANPTVSLQEFLMAEQSLPGT) are cytoplasmic. An intramembrane region (discontinuously helical) is located at residues 77–114 (GASANPTVSLQEFLMAEQSLPGTLLKLAAQGLGMQAAC). Residues 81–83 (NPT) carry the NPA 1 motif. Residues 100–126 (LLKLAAQGLGMQAACTLMRLCWAWELS) form a helical membrane-spanning segment. At 127–145 (DLHLLQSLMAQSCSSALRT) the chain is on the extracellular side. A helical membrane pass occupies residues 146-166 (SVPHGALVEAACAFCFHLTLL). Residues 167–178 (HLRHSPPAYSGP) are Cytoplasmic-facing. Residues 179–199 (AVALLVTVTAYTAGPFTSAFF) form a helical membrane-spanning segment. Residues 195-206 (TSAFFNPALAAS) constitute an intramembrane region (discontinuously helical). The NPA 2 motif lies at 200–202 (NPA). At 200–215 (NPALAASVTFACSGHT) the chain is on the extracellular side. Residues 216 to 236 (LLEYVQVYWLGPLTGMVLAVL) traverse the membrane as a helical segment. The Cytoplasmic portion of the chain corresponds to 237–295 (LHQGRLPHLFQRNLFYGQKNKYRAPRGKPAPASGDTQTPAKGSSVREPGRSGVEGPHSS). The tract at residues 257–295 (KYRAPRGKPAPASGDTQTPAKGSSVREPGRSGVEGPHSS) is disordered.

The protein belongs to the MIP/aquaporin (TC 1.A.8) family. AQP11/AQP12 subfamily. As to quaternary structure, homotetramer; each monomer provides an independent water pore. In terms of tissue distribution, restricted to the pancreas.

The protein localises to the membrane. The enzyme catalyses H2O(in) = H2O(out). In terms of biological role, putative aquaporin. Could form homotetrameric transmembrane channels, with each monomer independently mediating water transport across the plasma membrane along its osmotic gradient. This chain is Putative aquaporin-12A, found in Homo sapiens (Human).